A 557-amino-acid chain; its full sequence is Dihydroxy-acid dehydratase (557 aa).

Cys-49 provides a ligand contact to [2Fe-2S] cluster. Asp-81 provides a ligand contact to Mg(2+). Position 122 (Cys-122) interacts with [2Fe-2S] cluster. Residues Asp-123 and Lys-124 each contribute to the Mg(2+) site. Lys-124 is subject to N6-carboxylysine. Cys-194 is a [2Fe-2S] cluster binding site. Glu-446 contributes to the Mg(2+) binding site. Catalysis depends on Ser-472, which acts as the Proton acceptor.

Belongs to the IlvD/Edd family. In terms of assembly, homodimer. Requires [2Fe-2S] cluster as cofactor. It depends on Mg(2+) as a cofactor.

It catalyses the reaction (2R)-2,3-dihydroxy-3-methylbutanoate = 3-methyl-2-oxobutanoate + H2O. The enzyme catalyses (2R,3R)-2,3-dihydroxy-3-methylpentanoate = (S)-3-methyl-2-oxopentanoate + H2O. It functions in the pathway amino-acid biosynthesis; L-isoleucine biosynthesis; L-isoleucine from 2-oxobutanoate: step 3/4. Its pathway is amino-acid biosynthesis; L-valine biosynthesis; L-valine from pyruvate: step 3/4. Its function is as follows. Functions in the biosynthesis of branched-chain amino acids. Catalyzes the dehydration of (2R,3R)-2,3-dihydroxy-3-methylpentanoate (2,3-dihydroxy-3-methylvalerate) into 2-oxo-3-methylpentanoate (2-oxo-3-methylvalerate) and of (2R)-2,3-dihydroxy-3-methylbutanoate (2,3-dihydroxyisovalerate) into 2-oxo-3-methylbutanoate (2-oxoisovalerate), the penultimate precursor to L-isoleucine and L-valine, respectively. The sequence is that of Dihydroxy-acid dehydratase from Prochlorococcus marinus (strain AS9601).